Consider the following 66-residue polypeptide: Putative alpha-neurotoxin RjAa16 (66 aa).

In terms of domain architecture, LCN-type CS-alpha/beta spans 1–60 (KEGYPVDWGNCKYECMSDAYCKDLCVDRKAKSGYCYKLNWFCYCEGLPDDSPIKTNGHCR). Intrachain disulfides connect cysteine 11/cysteine 59, cysteine 15/cysteine 35, cysteine 21/cysteine 42, and cysteine 25/cysteine 44.

This sequence belongs to the long (4 C-C) scorpion toxin superfamily. Sodium channel inhibitor family. Alpha subfamily. In terms of tissue distribution, expressed by the venom gland.

The protein localises to the secreted. Its function is as follows. Alpha toxins bind voltage-independently at site-3 of sodium channels (Nav) and inhibits the inactivation of the activated channels, thereby blocking neuronal transmission. In Rhopalurus junceus (Caribbean blue scorpion), this protein is Putative alpha-neurotoxin RjAa16.